The following is a 212-amino-acid chain: Pyridoxine/pyridoxamine 5'-phosphate oxidase (212 aa).

Residues 8 to 11 (RREY) and lysine 66 contribute to the substrate site. FMN-binding positions include 61 to 66 (RIVLLK), 76 to 77 (FT), arginine 82, lysine 83, and glutamine 105. Tyrosine 123, arginine 127, and serine 131 together coordinate substrate. FMN is bound by residues 140–141 (QS) and tryptophan 185. Residue 191–193 (RLH) participates in substrate binding. Arginine 195 is a binding site for FMN.

Belongs to the pyridoxamine 5'-phosphate oxidase family. As to quaternary structure, homodimer. It depends on FMN as a cofactor.

It catalyses the reaction pyridoxamine 5'-phosphate + O2 + H2O = pyridoxal 5'-phosphate + H2O2 + NH4(+). It carries out the reaction pyridoxine 5'-phosphate + O2 = pyridoxal 5'-phosphate + H2O2. The protein operates within cofactor metabolism; pyridoxal 5'-phosphate salvage; pyridoxal 5'-phosphate from pyridoxamine 5'-phosphate: step 1/1. It participates in cofactor metabolism; pyridoxal 5'-phosphate salvage; pyridoxal 5'-phosphate from pyridoxine 5'-phosphate: step 1/1. Its function is as follows. Catalyzes the oxidation of either pyridoxine 5'-phosphate (PNP) or pyridoxamine 5'-phosphate (PMP) into pyridoxal 5'-phosphate (PLP). The polypeptide is Pyridoxine/pyridoxamine 5'-phosphate oxidase (Shewanella baltica (strain OS155 / ATCC BAA-1091)).